A 288-amino-acid chain; its full sequence is HTH-type transcriptional repressor CarA (288 aa).

The HTH merR-type domain maps to 2–73; sequence TLRIRTIARM…VSEAIAQVKT (72 aa). The segment at residues 5–24 is a DNA-binding region (H-T-H motif); that stretch reads IRTIARMTGIREATLRAWER. Residues 162–288 enclose the B12-binding domain; it reads GPRALLACPS…NQVRNAQNRP (127 aa).

The protein belongs to the CarA/CarH B12-binding photoregulator family. Forms homodimers or oligomers. Interacts with CarS.

Binds cobalamin (vitamin B12), but cobalamin is not required for CarA activity. Interaction with CarS prevents binding to DNA. Functionally, negative regulator of the carB operon in the dark. Binds specifically to the CarA operator, in the region around the carB promoter, which blocks access to the RNA polymerase. The protein is HTH-type transcriptional repressor CarA (carA) of Myxococcus xanthus.